A 144-amino-acid chain; its full sequence is Large ribosomal subunit protein uL11 (144 aa).

The protein belongs to the universal ribosomal protein uL11 family. Part of the ribosomal stalk of the 50S ribosomal subunit. Interacts with L10 and the large rRNA to form the base of the stalk. L10 forms an elongated spine to which L12 dimers bind in a sequential fashion forming a multimeric L10(L12)X complex. In terms of processing, one or more lysine residues are methylated.

Forms part of the ribosomal stalk which helps the ribosome interact with GTP-bound translation factors. This chain is Large ribosomal subunit protein uL11, found in Neisseria meningitidis serogroup A / serotype 4A (strain DSM 15465 / Z2491).